A 253-amino-acid chain; its full sequence is Probable glutathione transferase omega-2 (253 aa).

Residues 25 to 105 (GIYRIYNMRF…YLDDLFPESR (81 aa)) form the GST N-terminal domain. Cys-35 (nucleophile) is an active-site residue. Glutathione contacts are provided by residues Lys-62, Val-75, and 89 to 90 (ES). Residues 110-238 (DPYEKVQQKL…SQPTEMGVGF (129 aa)) form the GST C-terminal domain.

Belongs to the GST superfamily. Omega family.

It carries out the reaction RX + glutathione = an S-substituted glutathione + a halide anion + H(+). The catalysed reaction is L-dehydroascorbate + 2 glutathione = glutathione disulfide + L-ascorbate. It catalyses the reaction methylarsonate + 2 glutathione + H(+) = methylarsonous acid + glutathione disulfide + H2O. Functionally, exhibits glutathione-dependent thiol transferase activity. Has dehydroascorbate reductase activity and may contribute to the recycling of ascorbic acid. Participates in the biotransformation of inorganic arsenic and reduces monomethylarsonic acid (MMA). The protein is Probable glutathione transferase omega-2 of Caenorhabditis briggsae.